Here is a 346-residue protein sequence, read N- to C-terminus: MEKILVIRNDKLGDFMQAWPAFAMLKASNPKLKLTALVPSYTASLAEICPFIDHVIIDSKKNDKTDFKRLVQEIKAQQFDGMISFFSNTHNGKLAWKSGIKYRLAPATKWVQILYNHRLTQRRSRSEKSEAEYNQDLVRTFLQKHNMPVVEPKPPYLIFEKSAVENQRVFLQENLGLSANKKWIFVHSGSGGSATNLSLAQYADLIKGLLAEFDCNVVLTAGPGESEKAYELANLVNDLRVAIYDKNKGLVDFAHSLACADLFIAGSTGPLHLSSAFNIPTIGFYPNSRSSQPRRWKPINDVDKHIAFCPPAGKESQMNLELISIDNALAEISLFIRNMWQTSNNI.

It belongs to the glycosyltransferase 9 family.

This is Putative glycosyltransferase HI_0523 from Haemophilus influenzae (strain ATCC 51907 / DSM 11121 / KW20 / Rd).